We begin with the raw amino-acid sequence, 380 residues long: Glycogenin-2 (380 aa).

Leu-10, Tyr-16, and Arg-95 together coordinate UDP. The UDP-alpha-D-glucose site is built by Leu-10, Tyr-16, Arg-95, Lys-104, Asp-120, Ala-121, Asp-122, Asn-158, Thr-159, Asp-185, Asp-188, and Gln-189. Positions 120, 121, and 122 each coordinate UDP. Asp-120 serves as a coordination point for Mn(2+). Asp-122 lines the Mn(2+) pocket. Tyr-230 and Tyr-232 each carry an O-linked (Glc...) tyrosine glycan. Residues His-249, Gly-252, and Lys-255 each contribute to the UDP site. His-249 serves as a coordination point for Mn(2+). 2 residues coordinate UDP-alpha-D-glucose: Gly-252 and Lys-255. The interval 331–355 is disordered; sequence SVDRNASQKSTAEKHDIEKPTSKPQ. A compositionally biased stretch (basic and acidic residues) spans 341-351; sequence TAEKHDIEKPT. Tyr-367 carries O-linked (Glc...) tyrosine glycosylation.

The protein belongs to the glycosyltransferase 8 family. Glycogenin subfamily. As to quaternary structure, interacts with glycogen synthase GSY2. The cofactor is Mn(2+).

The protein localises to the cytoplasm. It localises to the vacuole. The catalysed reaction is L-tyrosyl-[glycogenin] + UDP-alpha-D-glucose = alpha-D-glucosyl-L-tyrosyl-[glycogenin] + UDP + H(+). It catalyses the reaction [1,4-alpha-D-glucosyl](n)-L-tyrosyl-[glycogenin] + UDP-alpha-D-glucose = [1,4-alpha-D-glucosyl](n+1)-L-tyrosyl-[glycogenin] + UDP + H(+). In terms of biological role, self-glucosylating initiator of glycogen synthesis. It catalyzes the formation of a short alpha (1,4)-glucosyl chain covalently attached via a glucose 1-O-tyrosyl linkage to internal tyrosine residues and these chains act as primers for the elongation reaction catalyzed by glycogen synthase. Capable of transferring glucosyl residues to unbound acceptors such as free oligoglucans or oligoglucan derivatives. The chain is Glycogenin-2 from Saccharomyces cerevisiae (strain ATCC 204508 / S288c) (Baker's yeast).